A 396-amino-acid chain; its full sequence is Elongation factor Tu (396 aa).

The 197-residue stretch at 10-206 folds into the tr-type G domain; sequence KPHVNVGTIG…ALDTYIPTPE (197 aa). The segment at 19–26 is G1; it reads GHVDHGKT. 19–26 serves as a coordination point for GTP; that stretch reads GHVDHGKT. Thr26 provides a ligand contact to Mg(2+). The segment at 60–64 is G2; sequence GITIN. Positions 81–84 are G3; sequence DCPG. GTP-binding positions include 81–85 and 136–139; these read DCPGH and NKAD. The tract at residues 136 to 139 is G4; sequence NKAD. The interval 174–176 is G5; the sequence is SAK.

The protein belongs to the TRAFAC class translation factor GTPase superfamily. Classic translation factor GTPase family. EF-Tu/EF-1A subfamily. Monomer.

The protein localises to the cytoplasm. It carries out the reaction GTP + H2O = GDP + phosphate + H(+). Its function is as follows. GTP hydrolase that promotes the GTP-dependent binding of aminoacyl-tRNA to the A-site of ribosomes during protein biosynthesis. The polypeptide is Elongation factor Tu (Bordetella bronchiseptica (strain ATCC BAA-588 / NCTC 13252 / RB50) (Alcaligenes bronchisepticus)).